A 611-amino-acid polypeptide reads, in one-letter code: Pescadillo homolog (611 aa).

Residues 310 to 335 (VQMGDPDEASPGEEEQFVAHASKSAP) are disordered. The span at 314–325 (DPDEASPGEEEQ) shows a compositional bias: acidic residues. A BRCT domain is found at 354–455 (PSSRLFAPYT…KILLEDTYAQ (102 aa)). 2 disordered regions span residues 469-506 (YEGA…ESNT) and 545-611 (VKKA…AGGK). The span at 482 to 498 (ADMDVETDGEEGEADAS) shows a compositional bias: acidic residues. 2 stretches are compositionally biased toward basic and acidic residues: residues 552-569 (KKPD…KDMN) and 579-602 (KLYE…EQRK). Positions 580–609 (LYEKMKYSQQKKAAEKEKLEQRKKQLQKAG) form a coiled coil.

It belongs to the pescadillo family. As to quaternary structure, component of the NOP7 complex, composed of ERB1, NOP7 and YTM1. The complex is held together by ERB1, which interacts with NOP7 via its N-terminal domain and with YTM1 via a high-affinity interaction between the seven-bladed beta-propeller domains of the 2 proteins. The NOP7 complex associates with the 66S pre-ribosome.

It is found in the nucleus. Its subcellular location is the nucleolus. The protein resides in the nucleoplasm. In terms of biological role, component of the NOP7 complex, which is required for maturation of the 25S and 5.8S ribosomal RNAs and formation of the 60S ribosome. The polypeptide is Pescadillo homolog (Coprinopsis cinerea (strain Okayama-7 / 130 / ATCC MYA-4618 / FGSC 9003) (Inky cap fungus)).